Here is a 506-residue protein sequence, read N- to C-terminus: Maturase K (506 aa).

It belongs to the intron maturase 2 family. MatK subfamily.

It localises to the plastid. The protein resides in the chloroplast. In terms of biological role, usually encoded in the trnK tRNA gene intron. Probably assists in splicing its own and other chloroplast group II introns. The protein is Maturase K of Hydrangea macrophylla (Bigleaf hydrangea).